The primary structure comprises 563 residues: Lipase 1 (563 aa).

The first 19 residues, 1–19 (MVSKTFFLAAALNVVGTLA), serve as a signal peptide directing secretion. Q20 is modified (pyrrolidone carboxylic acid). The cysteines at positions 80 and 124 are disulfide-linked. S236 acts as the Acyl-ester intermediate in catalysis. Residues C295 and C307 are joined by a disulfide bond. N302 is a glycosylation site (N-linked (GlcNAc...) asparagine). E373 (charge relay system) is an active-site residue. The N-linked (GlcNAc...) asparagine glycan is linked to N383. H482 acts as the Charge relay system in catalysis.

Belongs to the type-B carboxylesterase/lipase family. As to quaternary structure, monomer.

The protein resides in the secreted. It catalyses the reaction a triacylglycerol + H2O = a diacylglycerol + a fatty acid + H(+). Its function is as follows. Hydrolyzes all ester bonds in triglyceride and displays a high affinity for triolein. For unsaturated substrates having long fatty acyl chains (C18:2 cis-9, cis-12 and C18:3 cis-9, cis-12, cis-15) GCL I shows higher specific activity than GCL II, whereas GCL II shows higher specific activity against saturated substrates having short fatty acid chains (C8, C10, C12 and C14). The polypeptide is Lipase 1 (LIP1) (Geotrichum candidum (Oospora lactis)).